A 587-amino-acid polypeptide reads, in one-letter code: Phosphatidylinositol-3-phosphatase SAC1 (587 aa).

The Cytoplasmic segment spans residues 1 to 520 (MATAAYEQLK…SPLSVPRDWK (520 aa)). The region spanning 122-451 (LNHVLNVDGF…ANACAKQYAG (330 aa)) is the SAC domain. Residues 452-587 (TGALKTDFTR…PRLVQKEKID (136 aa)) are essential for phosphatidylinositol-4-phosphate phosphatase activity. Lys-456 is modified (N6-acetyllysine). Residues 521–541 (FLALPIIMVVAFSMCIICLLM) traverse the membrane as a helical segment. Topologically, residues 542–548 (AGDTWTE) are lumenal. The helical transmembrane segment at 549–569 (TLAYVLFWGVASIGTFFIILY) threads the bilayer. Topologically, residues 570-587 (NGKDFVDAPRLVQKEKID) are cytoplasmic.

As to quaternary structure, interacts with TMEM39A. Interacts with SEC23A and SEC24A; this interaction is reduced in the absence of TMEM39A. Interacts with PLEKHA3 and VAPA and/or VAPB to form a ternary complex.

It is found in the endoplasmic reticulum membrane. It localises to the golgi apparatus membrane. The enzyme catalyses a 1,2-diacyl-sn-glycero-3-phospho-(1D-myo-inositol-3-phosphate) + H2O = a 1,2-diacyl-sn-glycero-3-phospho-(1D-myo-inositol) + phosphate. It carries out the reaction a 1,2-diacyl-sn-glycero-3-phospho-(1D-myo-inositol 4-phosphate) + H2O = a 1,2-diacyl-sn-glycero-3-phospho-(1D-myo-inositol) + phosphate. In terms of biological role, phosphoinositide phosphatase which catalyzes the hydrolysis of phosphatidylinositol 4-phosphate (PtdIns(4)P), phosphatidylinositol 3-phosphate (PtdIns(3)P) and has low activity towards phosphatidylinositol-3,5-bisphosphate (PtdIns(3,5)P2). Shows a very robust PtdIns(4)P phosphatase activity when it binds PtdIns(4)P in a 'cis' configuration in the cellular environment, with much less activity seen when it binds PtdIns(4)P in 'trans' configuration. PtdIns(4)P phosphatase activity (when it binds PtdIns(4)P in 'trans' configuration) is enhanced in the presence of PLEKHA3. This chain is Phosphatidylinositol-3-phosphatase SAC1 (SACM1L), found in Pongo abelii (Sumatran orangutan).